The chain runs to 325 residues: Oligopeptide transport system permease protein OppB (325 aa).

Transmembrane regions (helical) follow at residues 12–32 (YLVL…LAFS), 102–122 (LVVG…WGAI), 135–155 (LALL…ILGA), 189–208 (LQHL…AGFS), 248–268 (IPMA…AVFV), and 290–310 (TNIV…AGLL). In terms of domain architecture, ABC transmembrane type-1 spans 95-311 (IGVSLRLLVV…AVVLLAGLLS (217 aa)).

This sequence belongs to the binding-protein-dependent transport system permease family. OppBC subfamily. As to quaternary structure, the complex is composed of an ATP-binding protein (OppD), two transmembrane proteins (OppB and OppC) and a solute-binding protein (OppA).

It is found in the cell inner membrane. In terms of biological role, part of the ABC transporter complex OppABCD involved in the uptake of oligopeptides. Responsible for the translocation of the substrate across the membrane. This is Oligopeptide transport system permease protein OppB from Mycobacterium bovis (strain ATCC BAA-935 / AF2122/97).